A 1120-amino-acid chain; its full sequence is Prophage side tail fiber protein homolog StfR (1120 aa).

Disordered stretches follow at residues 129 to 154, 221 to 442, and 960 to 1021; these read KSAS…SARA, SAST…ATRA, and SGRA…AGAH. Low complexity-rich tracts occupy residues 221 to 239, 248 to 395, and 402 to 442; these read SAST…ARDA, SSET…SASA, and RQAS…ATRA. The span at 985-1021 shows a compositional bias: polar residues; that stretch reads DLGTKTTSSFDYGTKSTNNTGAHTHSVSGSTNSAGAH.

Belongs to the tail fiber family.

The polypeptide is Prophage side tail fiber protein homolog StfR (stfR) (Escherichia coli (strain K12)).